The following is an 89-amino-acid chain: Large ribosomal subunit protein bL27 (89 aa).

The interval 1-20 (MAHKKAGGSSRNGRDSAGRR) is disordered.

This sequence belongs to the bacterial ribosomal protein bL27 family.

This Zymomonas mobilis subsp. mobilis (strain ATCC 31821 / ZM4 / CP4) protein is Large ribosomal subunit protein bL27.